A 603-amino-acid chain; its full sequence is Spastin (603 aa).

The interval 1–34 (MNSPGGRNNKKKPVTPAAETGPGPPTPPPPPAET) is disordered. Over 1-54 (MNSPGGRNNKKKPVTPAAETGPGPPTPPPPPAETQVLLAPPSLHKRNLYLFSYP) the chain is Cytoplasmic. Pro residues predominate over residues 22 to 32 (PGPPTPPPPPA). An intramembrane region (helical) is located at residues 55-75 (LLAAFSLLRFLAFQLGLLFVW). Over 76 to 603 (FCERLSRRVM…WNKEFGDTTV (528 aa)) the chain is Cytoplasmic. The MIT domain occupies 113–188 (YHQQAFQYIS…LMAKDRLQLL (76 aa)). The interval 216-294 (GLLKPEKGAV…RTNKPTTPTT (79 aa)) is disordered. Residues 219-231 (KPEKGAVPKKKDP) show a composition bias toward basic and acidic residues. Low complexity predominate over residues 281 to 294 (KNNTRTNKPTTPTT). ATP is bound at residue 369-376 (GPPGNGKT).

This sequence belongs to the AAA ATPase family. Spastin subfamily. Homohexamer. The homohexamer is stabilized by ATP-binding. The homohexamer may adopt a ring conformation through which microtubules pass prior to being severed. Interacts with microtubules.

It localises to the membrane. Its subcellular location is the cytoplasm. It is found in the cytoskeleton. The protein localises to the microtubule organizing center. The protein resides in the centrosome. It localises to the perinuclear region. Its subcellular location is the nucleus. The enzyme catalyses n ATP + n H2O + a microtubule = n ADP + n phosphate + (n+1) alpha/beta tubulin heterodimers.. Its function is as follows. ATP-dependent microtubule severing protein that specifically recognizes and cuts microtubules that are polyglutamylated. Preferentially recognizes and acts on microtubules decorated with short polyglutamate tails: severing activity increases as the number of glutamates per tubulin rises from one to eight, but decreases beyond this glutamylation threshold. Microtubule severing promotes reorganization of cellular microtubule arrays and the release of microtubules from the centrosome following nucleation. Required for membrane traffic from the endoplasmic reticulum (ER) to the Golgi and for completion of the abscission stage of cytokinesis. Also plays a role in axon growth and the formation of axonal branches. This Xenopus tropicalis (Western clawed frog) protein is Spastin.